Reading from the N-terminus, the 441-residue chain is GTPase Der (441 aa).

EngA-type G domains follow at residues 3-167 and 176-351; these read PLIA…PNKT and TRIA…EQFA. GTP contacts are provided by residues 9-16, 56-60, 119-122, 182-189, 229-233, and 294-297; these read GRPNVGKS, DTGGF, NKID, DTAGI, and NKWD. The KH-like domain occupies 352-436; it reads KRISTSDLNR…PMRLLFKGRE (85 aa).

It belongs to the TRAFAC class TrmE-Era-EngA-EngB-Septin-like GTPase superfamily. EngA (Der) GTPase family. Associates with the 50S ribosomal subunit.

Its function is as follows. GTPase that plays an essential role in the late steps of ribosome biogenesis. This chain is GTPase Der, found in Geotalea daltonii (strain DSM 22248 / JCM 15807 / FRC-32) (Geobacter daltonii).